Consider the following 424-residue polypeptide: CinA-like protein (424 aa).

This sequence belongs to the CinA family.

This is CinA-like protein from Nostoc sp. (strain PCC 7120 / SAG 25.82 / UTEX 2576).